Reading from the N-terminus, the 475-residue chain is Pentatricopeptide repeat-containing protein At1g29710, mitochondrial (475 aa).

Residues 1–37 (MVRLWCGKLRLWKPYLALATQSRNSWFCSGGGAPSHH) constitute a mitochondrion transit peptide. 6 PPR repeats span residues 83–117 (AQNV…GYAM), 118–148 (DLIR…IIAL), 153–183 (DVGA…MPEW), 184–218 (NSGT…GNKP), 219–254 (NGEI…GIVP), and 255–285 (SMEH…MPME). Residues 350–380 (YFYSTFRPVDSSHPQMNIIYETLMSLRSQLK) form a type E(+) motif region. A type DYW motif region spans residues 381 to 475 (EMGYVPDTRY…NGVCRCNNLW (95 aa)).

It belongs to the PPR family. PCMP-H subfamily.

The protein resides in the mitochondrion. This Arabidopsis thaliana (Mouse-ear cress) protein is Pentatricopeptide repeat-containing protein At1g29710, mitochondrial (PCMP-H67).